Here is a 186-residue protein sequence, read N- to C-terminus: Inner membrane-spanning protein YciB (186 aa).

The next 6 membrane-spanning stretches (helical) occupy residues 3–23, 24–44, 49–69, 76–96, 121–141, and 149–169; these read FLFDLFPVILFFAAFKVAGIY, VATTVAMVATVAQIAWVWFKH, AMQWLSLLIIVVFGGATLIFH, WKPTVLYWMFGVVLLGSAVLL, LVWSLFFLAMGGLNLYVAYHF, and FKLFGSMGLMVVFILVQSVWL.

The protein belongs to the YciB family.

The protein resides in the cell inner membrane. Plays a role in cell envelope biogenesis, maintenance of cell envelope integrity and membrane homeostasis. The protein is Inner membrane-spanning protein YciB of Ralstonia nicotianae (strain ATCC BAA-1114 / GMI1000) (Ralstonia solanacearum).